We begin with the raw amino-acid sequence, 121 residues long: Ribosome-binding factor A (121 aa).

It belongs to the RbfA family. As to quaternary structure, monomer. Binds 30S ribosomal subunits, but not 50S ribosomal subunits or 70S ribosomes.

It is found in the cytoplasm. In terms of biological role, one of several proteins that assist in the late maturation steps of the functional core of the 30S ribosomal subunit. Associates with free 30S ribosomal subunits (but not with 30S subunits that are part of 70S ribosomes or polysomes). Required for efficient processing of 16S rRNA. May interact with the 5'-terminal helix region of 16S rRNA. The chain is Ribosome-binding factor A from Brevibacillus brevis (strain 47 / JCM 6285 / NBRC 100599).